A 1569-amino-acid polypeptide reads, in one-letter code: Zinc finger protein GLI3 (1569 aa).

Polar residues-rich tracts occupy residues M1–A10 and A416–G432. Disordered stretches follow at residues M1 to S79 and S414 to D461. 5 C2H2-type zinc fingers span residues T485–H510, F518–H545, H551–H575, Y581–H606, and Y612–H637. Disordered stretches follow at residues D625–S731, S899–P921, P1202–D1228, and S1335–Q1364. Residues H637–P653 show a composition bias toward basic and acidic residues. The span at S663–G676 shows a compositional bias: polar residues. A compositionally biased stretch (basic and acidic residues) spans H678–K704. Polar residues predominate over residues P705–S731. Low complexity predominate over residues S1335–T1350. The segment covering S1352–Q1364 has biased composition (polar residues).

It belongs to the GLI C2H2-type zinc-finger protein family. In terms of processing, phosphorylation is essential for its proteolytic processing. The repressor form (GLI3R), a C-terminally truncated form is generated from the full-length GLI3 protein (GLI3FL) through proteolytic processing.

The protein resides in the nucleus. It is found in the cytoplasm. In terms of biological role, has a dual function as a transcriptional activator and a repressor of the sonic hedgehog (Shh) pathway, and may play a role in limb development. May bind to the minimal GLI-consensus sequence 5'-GGGTGGTC-3'. Has an essential role in the early embryonic patterning of mesoderm and neuroectoderm. The polypeptide is Zinc finger protein GLI3 (gli3) (Xenopus laevis (African clawed frog)).